A 40-amino-acid chain; its full sequence is Large ribosomal subunit protein bL36B (40 aa).

This sequence belongs to the bacterial ribosomal protein bL36 family.

In Leifsonia xyli subsp. xyli (strain CTCB07), this protein is Large ribosomal subunit protein bL36B.